A 741-amino-acid polypeptide reads, in one-letter code: Translation initiation factor IF-2 (741 aa).

Basic and acidic residues-rich tracts occupy residues 48–74 (HQYR…DKPK) and 107–123 (KGKE…EKKA). The segment at 48–158 (HQYRPKAEKK…PQPAKKEKEL (111 aa)) is disordered. Over residues 127–139 (AKKKGKGPAKGKK) the composition is skewed to basic residues. Residues 140 to 151 (QAAPAAKQVPQP) are compositionally biased toward low complexity. The region spanning 242 to 411 (ERPPVVTIMG…LLVSEMEELK (170 aa)) is the tr-type G domain. Residues 251–258 (GHVDHGKT) are G1. Residue 251–258 (GHVDHGKT) coordinates GTP. The G2 stretch occupies residues 276 to 280 (GITQH). A G3 region spans residues 297–300 (DTPG). Residues 297 to 301 (DTPGH) and 351 to 354 (NKMD) contribute to the GTP site. Residues 351-354 (NKMD) are G4. The G5 stretch occupies residues 387–389 (SAK).

This sequence belongs to the TRAFAC class translation factor GTPase superfamily. Classic translation factor GTPase family. IF-2 subfamily.

The protein resides in the cytoplasm. In terms of biological role, one of the essential components for the initiation of protein synthesis. Protects formylmethionyl-tRNA from spontaneous hydrolysis and promotes its binding to the 30S ribosomal subunits. Also involved in the hydrolysis of GTP during the formation of the 70S ribosomal complex. The chain is Translation initiation factor IF-2 (infB) from Geobacillus stearothermophilus (Bacillus stearothermophilus).